The sequence spans 305 residues: Acetylglutamate kinase (305 aa).

Substrate is bound by residues 78 to 79, arginine 100, and asparagine 202; that span reads GG.

Belongs to the acetylglutamate kinase family. ArgB subfamily.

It localises to the cytoplasm. It catalyses the reaction N-acetyl-L-glutamate + ATP = N-acetyl-L-glutamyl 5-phosphate + ADP. The protein operates within amino-acid biosynthesis; L-arginine biosynthesis; N(2)-acetyl-L-ornithine from L-glutamate: step 2/4. Its function is as follows. Catalyzes the ATP-dependent phosphorylation of N-acetyl-L-glutamate. The chain is Acetylglutamate kinase from Polaromonas sp. (strain JS666 / ATCC BAA-500).